A 417-amino-acid polypeptide reads, in one-letter code: 4-hydroxy-3-methylbut-2-en-1-yl diphosphate synthase (flavodoxin) (417 aa).

[4Fe-4S] cluster-binding residues include Cys-307, Cys-310, Cys-353, and Glu-360.

The protein belongs to the IspG family. [4Fe-4S] cluster is required as a cofactor.

The enzyme catalyses (2E)-4-hydroxy-3-methylbut-2-enyl diphosphate + oxidized [flavodoxin] + H2O + 2 H(+) = 2-C-methyl-D-erythritol 2,4-cyclic diphosphate + reduced [flavodoxin]. It functions in the pathway isoprenoid biosynthesis; isopentenyl diphosphate biosynthesis via DXP pathway; isopentenyl diphosphate from 1-deoxy-D-xylulose 5-phosphate: step 5/6. In terms of biological role, converts 2C-methyl-D-erythritol 2,4-cyclodiphosphate (ME-2,4cPP) into 1-hydroxy-2-methyl-2-(E)-butenyl 4-diphosphate. This is 4-hydroxy-3-methylbut-2-en-1-yl diphosphate synthase (flavodoxin) from Xylella fastidiosa (strain 9a5c).